A 248-amino-acid polypeptide reads, in one-letter code: Probable N-acetylglucosaminyl-phosphatidylinositol de-N-acetylase (248 aa).

The Lumenal segment spans residues 1 to 7; sequence MIWFWST. A helical transmembrane segment spans residues 8–24; sequence LLVTAIAVLSTANESSS. Residues 25 to 248 lie on the Cytoplasmic side of the membrane; sequence GQEKLAVESI…MSNNVLKRAT (224 aa).

Belongs to the PIGL family.

It is found in the endoplasmic reticulum membrane. The enzyme catalyses a 6-(N-acetyl-alpha-D-glucosaminyl)-1-(1,2-diacyl-sn-glycero-3-phospho)-1D-myo-inositol + H2O = a 6-(alpha-D-glucosaminyl)-1-(1,2-diacyl-sn-glycero-3-phospho)-1D-myo-inositol + acetate. It functions in the pathway glycolipid biosynthesis; glycosylphosphatidylinositol-anchor biosynthesis. In terms of biological role, involved in the second step of GPI biosynthesis. De-N-acetylation of N-acetylglucosaminyl-phosphatidylinositol. In Schizosaccharomyces pombe (strain 972 / ATCC 24843) (Fission yeast), this protein is Probable N-acetylglucosaminyl-phosphatidylinositol de-N-acetylase (gpi12).